We begin with the raw amino-acid sequence, 193 residues long: Probable thymidylate kinase (193 aa).

7 to 14 (GIDGAGKT) contributes to the ATP binding site.

The protein belongs to the thymidylate kinase family.

The catalysed reaction is dTMP + ATP = dTDP + ADP. The protein is Probable thymidylate kinase (tmk) of Thermoplasma acidophilum (strain ATCC 25905 / DSM 1728 / JCM 9062 / NBRC 15155 / AMRC-C165).